Here is a 726-residue protein sequence, read N- to C-terminus: L-lysine 6-oxidase (726 aa).

A cross-link (4'-cysteinyl-tryptophylquinone (Cys-Trp)) is located at residues 516–581 (CTIQTVNFSE…LPPAYYSYWW (66 aa)). A Tryptophylquinone modification is found at Trp-581.

Homotetramer. Cysteine tryptophylquinone residue serves as cofactor. The cysteine tryptophylquinone (CTQ) is generated by oxidation of the indole ring of a tryptophan residue to form tryptophylquinone, followed by covalent cross-linking with a cysteine residue.

It is found in the secreted. It carries out the reaction L-lysine + O2 + H2O = (S)-2-amino-6-oxohexanoate + H2O2 + NH4(+). With respect to regulation, inhibited by aminoguanidine, amiloride and beta-aminopropionitrile. Has antibacterial activity against a wide spectrum of Gram-positive and Gram-negative bacteria including nosocomial isolates of S.aureus and Pseudomonas sp. The antimicrobial activity is due to hydrogen peroxide generated by its lysine oxidase activity. Also has autotoxic activity. Involved in biofilm differentiation; responsible for cell death within microcolonies during biofilm development which is linked to the generation of a phenotypically diverse dispersal population and thus may play a role in colonization. The polypeptide is L-lysine 6-oxidase (lodA) (Marinomonas mediterranea (strain ATCC 700492 / JCM 21426 / NBRC 103028 / MMB-1)).